Consider the following 102-residue polypeptide: MFLTALLCRGRIPGRQWIGKHRRPRTVSALAKQNMIRRLEIEAENHYWLSRPFLTAEQERGHAAARRAAAFEALKAAQAAKFPAHRRLEDQLDHLNVTRKWS.

This sequence belongs to the mitochondrion-specific ribosomal protein mL63 family.

The protein resides in the mitochondrion. This Bos taurus (Bovine) protein is Large ribosomal subunit protein mL63 (MRPL57).